We begin with the raw amino-acid sequence, 686 residues long: Ovotransferrin (686 aa).

Transferrin-like domains lie at 7-333 (VRWC…SLRK) and 345-670 (IQWC…SLNT). Disulfide bonds link Cys10–Cys45, Cys20–Cys36, Cys115–Cys197, Cys160–Cys174, Cys171–Cys182, and Cys228–Cys242. Residues 333 to 341 (KDQLTVGPR) form a connecting region region. 9 disulfide bridges follow: Cys348–Cys380, Cys358–Cys371, Cys405–Cys680, Cys421–Cys643, Cys454–Cys530, Cys478–Cys671, Cys488–Cys502, Cys499–Cys513, and Cys570–Cys584. The N-linked (GlcNAc...) asparagine glycan is linked to Asn473. N-linked (GlcNAc...) asparagine glycosylation is present at Asn548.

It belongs to the transferrin family. In terms of assembly, monomer.

It is found in the secreted. In terms of biological role, transferrins are iron binding transport proteins which can bind two Fe(3+) ions in association with the binding of an anion, usually bicarbonate. It is responsible for the transport of iron from sites of absorption and heme degradation to those of storage and utilization. Serum transferrin may also have a further role in stimulating cell proliferation. Functionally, ovotransferrin has a bacteriostatic function. Its concentration in avian egg is the highest concentration of any transferrin in vivo. This Anas platyrhynchos (Mallard) protein is Ovotransferrin.